Consider the following 129-residue polypeptide: Glycine cleavage system H protein (129 aa).

In terms of domain architecture, Lipoyl-binding spans 23 to 104 (TATIGITQHA…AYAAWLFRLK (82 aa)). Lys-64 is subject to N6-lipoyllysine.

The protein belongs to the GcvH family. The glycine cleavage system is composed of four proteins: P, T, L and H. Requires (R)-lipoate as cofactor.

The glycine cleavage system catalyzes the degradation of glycine. The H protein shuttles the methylamine group of glycine from the P protein to the T protein. The polypeptide is Glycine cleavage system H protein (Nitrosospira multiformis (strain ATCC 25196 / NCIMB 11849 / C 71)).